A 122-amino-acid chain; its full sequence is Large ribosomal subunit protein uL14 (122 aa).

It belongs to the universal ribosomal protein uL14 family. In terms of assembly, part of the 50S ribosomal subunit. Forms a cluster with proteins L3 and L19. In the 70S ribosome, L14 and L19 interact and together make contacts with the 16S rRNA in bridges B5 and B8.

Its function is as follows. Binds to 23S rRNA. Forms part of two intersubunit bridges in the 70S ribosome. This chain is Large ribosomal subunit protein uL14, found in Alkalilimnicola ehrlichii (strain ATCC BAA-1101 / DSM 17681 / MLHE-1).